A 184-amino-acid chain; its full sequence is MSDILSETRSRMKKSIESLSRELATINAGRANSNLLAGVKVDYYGAPTPVQQLASINVPEPRLLVVSPYDKTSLSDIERAINAANLGVNPSSDGEVIRIMVPALTEERRKELVKDVKKMGENAKVSIRNIRRDSNDDLKKDEKEGVISEDELRTGTDDVQKITDESIKEVDKVLEEKEKDIMSV.

Belongs to the RRF family.

It is found in the cytoplasm. In terms of biological role, responsible for the release of ribosomes from messenger RNA at the termination of protein biosynthesis. May increase the efficiency of translation by recycling ribosomes from one round of translation to another. The chain is Ribosome-recycling factor from Staphylococcus carnosus (strain TM300).